The following is a 348-amino-acid chain: Phosphate acyltransferase (348 aa).

The protein belongs to the PlsX family. As to quaternary structure, homodimer. Probably interacts with PlsY.

Its subcellular location is the cytoplasm. The catalysed reaction is a fatty acyl-[ACP] + phosphate = an acyl phosphate + holo-[ACP]. Its pathway is lipid metabolism; phospholipid metabolism. In terms of biological role, catalyzes the reversible formation of acyl-phosphate (acyl-PO(4)) from acyl-[acyl-carrier-protein] (acyl-ACP). This enzyme utilizes acyl-ACP as fatty acyl donor, but not acyl-CoA. This Lactiplantibacillus plantarum (strain ATCC BAA-793 / NCIMB 8826 / WCFS1) (Lactobacillus plantarum) protein is Phosphate acyltransferase.